The sequence spans 106 residues: uncharacterized protein (106 aa).

The signal sequence occupies residues 1–27 (MHHFVPSISLFMASVSFSVFFSHLATS). A helical membrane pass occupies residues 42-62 (TLFSMVPLINSSFNLSVFLFF).

The protein resides in the membrane. This is an uncharacterized protein from Saccharomyces cerevisiae (strain ATCC 204508 / S288c) (Baker's yeast).